The primary structure comprises 240 residues: Uridylate kinase (240 aa).

12–15 (KLSG) contacts ATP. A UMP-binding site is contributed by Gly-54. ATP contacts are provided by Gly-55 and Arg-59. UMP-binding positions include Asp-74 and 135–142 (TGNPFFTT). 3 residues coordinate ATP: Thr-162, Tyr-168, and Asp-171.

Belongs to the UMP kinase family. Homohexamer.

The protein localises to the cytoplasm. The catalysed reaction is UMP + ATP = UDP + ADP. It participates in pyrimidine metabolism; CTP biosynthesis via de novo pathway; UDP from UMP (UMPK route): step 1/1. Inhibited by UTP. Functionally, catalyzes the reversible phosphorylation of UMP to UDP. The protein is Uridylate kinase of Xanthomonas euvesicatoria pv. vesicatoria (strain 85-10) (Xanthomonas campestris pv. vesicatoria).